The primary structure comprises 164 residues: Interferon gamma (164 aa).

Positions 1-19 (MTCQTYNLFVLSVIMIYYG) are cleaved as a signal peptide. N-linked (GlcNAc...) asparagine glycosylation is found at Asn42 and Asn61.

The protein belongs to the type II (or gamma) interferon family. In terms of assembly, homodimer.

Its subcellular location is the secreted. Its function is as follows. Produced by lymphocytes activated by specific antigens or mitogens. IFN-gamma, in addition to having antiviral activity, has important immunoregulatory functions. It is a potent activator of macrophages, it has antiproliferative effects on transformed cells and it can potentiate the antiviral and antitumor effects of the type I interferons. In Numida meleagris (Helmeted guineafowl), this protein is Interferon gamma (IFNG).